The following is a 254-amino-acid chain: 5'-nucleotidase SurE (254 aa).

Residues D8, D9, S40, and N93 each coordinate a divalent metal cation.

It belongs to the SurE nucleotidase family. A divalent metal cation is required as a cofactor.

The protein resides in the cytoplasm. The catalysed reaction is a ribonucleoside 5'-phosphate + H2O = a ribonucleoside + phosphate. In terms of biological role, nucleotidase that shows phosphatase activity on nucleoside 5'-monophosphates. This is 5'-nucleotidase SurE from Methylorubrum extorquens (strain CM4 / NCIMB 13688) (Methylobacterium extorquens).